A 204-amino-acid chain; its full sequence is Large ribosomal subunit protein eL15z (204 aa).

It belongs to the eukaryotic ribosomal protein eL15 family.

The protein is Large ribosomal subunit protein eL15z (SB61) of Picea mariana (Black spruce).